A 365-amino-acid polypeptide reads, in one-letter code: Aminomethyltransferase (365 aa).

It belongs to the GcvT family. The glycine cleavage system is composed of four proteins: P, T, L and H.

The enzyme catalyses N(6)-[(R)-S(8)-aminomethyldihydrolipoyl]-L-lysyl-[protein] + (6S)-5,6,7,8-tetrahydrofolate = N(6)-[(R)-dihydrolipoyl]-L-lysyl-[protein] + (6R)-5,10-methylene-5,6,7,8-tetrahydrofolate + NH4(+). Functionally, the glycine cleavage system catalyzes the degradation of glycine. This Desulfitobacterium hafniense (strain DSM 10664 / DCB-2) protein is Aminomethyltransferase.